A 229-amino-acid polypeptide reads, in one-letter code: Peroxiredoxin-like 2A (229 aa).

The thioredoxin fold stretch occupies residues 14-112 (MWSIGVGAFG…DELGVPLYAV (99 aa)). Catalysis depends on redox-active residues C85 and C88.

Belongs to the peroxiredoxin-like PRXL2 family. PRXL2A subfamily. Expressed by the principal cells of the epididymis. Detected in the head region of epididymal sperm (at protein level). Expressed in bone marrow.

The protein localises to the cytoplasm. Its subcellular location is the secreted. Involved in redox regulation of the cell. Acts as an antioxidant. Inhibits TNFSF11-induced NFKB1 and JUN activation and osteoclast differentiation. May affect bone resorption and help to maintain bone mass. Acts as a negative regulator of macrophage-mediated inflammation by inhibiting macrophage production of inflammatory cytokines, probably through suppression of the MAPK signaling pathway. This is Peroxiredoxin-like 2A from Rattus norvegicus (Rat).